Consider the following 138-residue polypeptide: Ribulose bisphosphate carboxylase small subunit (138 aa).

Belongs to the RuBisCO small chain family. In terms of assembly, heterohexadecamer of 8 large and 8 small subunits.

Its subcellular location is the plastid. It is found in the chloroplast. In terms of biological role, ruBisCO catalyzes two reactions: the carboxylation of D-ribulose 1,5-bisphosphate, the primary event in carbon dioxide fixation, as well as the oxidative fragmentation of the pentose substrate in the photorespiration process. Both reactions occur simultaneously and in competition at the same active site. Although the small subunit is not catalytic it is essential for maximal activity. The protein is Ribulose bisphosphate carboxylase small subunit of Pyropia katadae (Red alga).